Here is a 593-residue protein sequence, read N- to C-terminus: Early nodule-specific protein 2 (593 aa).

Residues 71 to 110 show a composition bias toward pro residues; it reads EKPPIYEPPPTEEPPPVYKPPIIHPPPNYKPPAHTPPIYH. Positions 71-593 are disordered; the sequence is EKPPIYEPPP…GHYPPYKKNQ (523 aa). 2 stretches are compositionally biased toward basic and acidic residues: residues 123 to 138 and 166 to 195; these read PYEK…EYQP and PPYE…EKPP. Residues 196–210 are compositionally biased toward pro residues; it reads PEYTPPYEKPPPEYQ. Basic and acidic residues-rich tracts occupy residues 227 to 265 and 275 to 292; these read PPHE…EKPP. The segment covering 294–306 has biased composition (pro residues); it reads VHPPPEYQPPYLK. Basic and acidic residues-rich tracts occupy residues 339-350, 360-372, 382-394, and 404-421; these read PPHEKPPHEHPP, PPPE…ENPP, PPHE…EHPP, and PPPE…EHPP. A compositionally biased stretch (pro residues) spans 422–435; that stretch reads PEYQPPQENPPPEY. A compositionally biased stretch (basic and acidic residues) spans 506-522; it reads PRHEKPMPKYQPPHEKL. The segment covering 532-558 has biased composition (pro residues); that stretch reads KTPPPQAYHPPPPIYHHPPFHPPPHVK.

The protein belongs to the nodulin 75 family.

Involved in early stages of root nodule development. The sequence is that of Early nodule-specific protein 2 from Medicago truncatula (Barrel medic).